The sequence spans 61 residues: Small ribosomal subunit protein uS14 (61 aa).

Zn(2+) contacts are provided by cysteine 24, cysteine 27, cysteine 40, and cysteine 43.

Belongs to the universal ribosomal protein uS14 family. Zinc-binding uS14 subfamily. Part of the 30S ribosomal subunit. Contacts proteins S3 and S10. Zn(2+) is required as a cofactor.

In terms of biological role, binds 16S rRNA, required for the assembly of 30S particles and may also be responsible for determining the conformation of the 16S rRNA at the A site. The chain is Small ribosomal subunit protein uS14 from Campylobacter fetus subsp. fetus (strain 82-40).